We begin with the raw amino-acid sequence, 312 residues long: Olfactory receptor 8K3 (312 aa).

Residues M1–A25 are Extracellular-facing. N5 carries N-linked (GlcNAc...) asparagine glycosylation. Residues P26–I46 traverse the membrane as a helical segment. Over V47–R54 the chain is Cytoplasmic. Residues L55–T75 traverse the membrane as a helical segment. Residues T76–T99 lie on the Extracellular side of the membrane. C97 and C189 are disulfide-bonded. Residues Q100 to Y120 form a helical membrane-spanning segment. Residues D121–R139 lie on the Cytoplasmic side of the membrane. Residues V140–T160 traverse the membrane as a helical segment. The Extracellular segment spans residues I161–L197. A helical membrane pass occupies residues I198 to S217. The Cytoplasmic segment spans residues Y218–A236. A helical transmembrane segment spans residues F237–M257. The Extracellular segment spans residues Y258–D270. A helical transmembrane segment spans residues K271–L291. At R292 to V312 the chain is on the cytoplasmic side.

This sequence belongs to the G-protein coupled receptor 1 family.

It localises to the cell membrane. Its function is as follows. Odorant receptor. This chain is Olfactory receptor 8K3 (OR8K3), found in Homo sapiens (Human).